Here is a 241-residue protein sequence, read N- to C-terminus: Uracil-DNA glycosylase (241 aa).

The Proton acceptor role is filled by Asp-71. The interval 221-241 (ISPIDWSLPPRNELDTTSAGA) is disordered.

It belongs to the uracil-DNA glycosylase (UDG) superfamily. UNG family.

It localises to the cytoplasm. The enzyme catalyses Hydrolyzes single-stranded DNA or mismatched double-stranded DNA and polynucleotides, releasing free uracil.. Its function is as follows. Excises uracil residues from the DNA which can arise as a result of misincorporation of dUMP residues by DNA polymerase or due to deamination of cytosine. The protein is Uracil-DNA glycosylase of Xanthomonas oryzae pv. oryzae (strain MAFF 311018).